The primary structure comprises 685 residues: Methionine--tRNA ligase (685 aa).

4 residues coordinate Zn(2+): C142, C145, C155, and C158. Positions 330–334 (KMSKS) match the 'KMSKS' region motif. K333 contacts ATP. One can recognise a tRNA-binding domain in the interval 584–685 (DFIKVDLRVA…SGAKPGDKVS (102 aa)).

The protein belongs to the class-I aminoacyl-tRNA synthetase family. MetG type 1 subfamily. In terms of assembly, homodimer. The cofactor is Zn(2+).

The protein resides in the cytoplasm. It carries out the reaction tRNA(Met) + L-methionine + ATP = L-methionyl-tRNA(Met) + AMP + diphosphate. In terms of biological role, is required not only for elongation of protein synthesis but also for the initiation of all mRNA translation through initiator tRNA(fMet) aminoacylation. This Acinetobacter baylyi (strain ATCC 33305 / BD413 / ADP1) protein is Methionine--tRNA ligase.